The following is a 428-amino-acid chain: Nuclear hormone receptor family member nhr-44 (428 aa).

Positions 21–98 form a DNA-binding region, nuclear receptor; that stretch reads SEKCLVCFQP…LGMKPDNIQR (78 aa). NR C4-type zinc fingers lie at residues 24 to 44 and 61 to 86; these read CLVC…CRAC and CREG…SDKC. An NR LBD domain is found at 181-427; the sequence is SLEQLAFGLQ…LSHPEMFQFS (247 aa).

The protein belongs to the nuclear hormone receptor family.

It localises to the nucleus. Orphan nuclear receptor. This chain is Nuclear hormone receptor family member nhr-44 (nhr-44), found in Caenorhabditis elegans.